Consider the following 450-residue polypeptide: tRNA modification GTPase MnmE (450 aa).

Residues Arg-20, Glu-78, and Lys-117 each coordinate (6S)-5-formyl-5,6,7,8-tetrahydrofolate. One can recognise a TrmE-type G domain in the interval 211–372 (GLRMVIVGKP…LEESIYRETQ (162 aa)). Asn-221 serves as a coordination point for K(+). GTP contacts are provided by residues 221 to 226 (NVGKST), 240 to 246 (TDIPGTT), and 265 to 268 (DTAG). Ser-225 lines the Mg(2+) pocket. K(+) is bound by residues Thr-240, Ile-242, and Thr-245. Thr-246 contributes to the Mg(2+) binding site. Position 450 (Lys-450) interacts with (6S)-5-formyl-5,6,7,8-tetrahydrofolate.

The protein belongs to the TRAFAC class TrmE-Era-EngA-EngB-Septin-like GTPase superfamily. TrmE GTPase family. In terms of assembly, homodimer. Heterotetramer of two MnmE and two MnmG subunits. K(+) is required as a cofactor.

It is found in the cytoplasm. In terms of biological role, exhibits a very high intrinsic GTPase hydrolysis rate. Involved in the addition of a carboxymethylaminomethyl (cmnm) group at the wobble position (U34) of certain tRNAs, forming tRNA-cmnm(5)s(2)U34. The protein is tRNA modification GTPase MnmE of Thermotoga sp. (strain RQ2).